The sequence spans 239 residues: Aspartate/glutamate leucyltransferase (239 aa).

This sequence belongs to the R-transferase family. Bpt subfamily.

It localises to the cytoplasm. It carries out the reaction N-terminal L-glutamyl-[protein] + L-leucyl-tRNA(Leu) = N-terminal L-leucyl-L-glutamyl-[protein] + tRNA(Leu) + H(+). The catalysed reaction is N-terminal L-aspartyl-[protein] + L-leucyl-tRNA(Leu) = N-terminal L-leucyl-L-aspartyl-[protein] + tRNA(Leu) + H(+). Its function is as follows. Functions in the N-end rule pathway of protein degradation where it conjugates Leu from its aminoacyl-tRNA to the N-termini of proteins containing an N-terminal aspartate or glutamate. The sequence is that of Aspartate/glutamate leucyltransferase from Campylobacter jejuni subsp. jejuni serotype O:2 (strain ATCC 700819 / NCTC 11168).